The sequence spans 1883 residues: MDGQEHAEVPNSMVEDDQSVVAAEAIAELANSTGEPNPEEGEEQSVEDELIAKAQKLMEDITSVANNPNPNILHALSQLLESQESLFLEENGHFSNARGSHNSGKLCILIRENDEFFELISSTFLSENSYSTAVKAASARLLMNCSLTWMYPHVFDDAVTENFKNWVMEEAVKFPGEDSAKKEASDFEMLKTYSTGLLALSLASRGQIVEDVLTSGLSAKLMHYLRVRVLKEPSTSRIHTTETKHVSLKTKEEGRSRVRKIVDTVEGDHVLETDSGREMGQTDVQPDGEFEIDGRDVFNVSGVVDCKIKPGDDNSVRDDPSRHRLNRSKSRGRGRVHEGAPDTEVLLASPRLGRLLVRDRDLSKISDGRNAEDVTVCLGKMKSGIMEIEREDNDECFQGCIIGTKNITDLVKRAVGAAETEARAAHAPDDAAKAAGDAAAELVKTAALEEFKSSGSEEAAVSAATRAAITVIDAAEVSRNPTCVTSDQTTDVSEVSLPDIESLAQLQEKYCIQCLEILGEYVEVLGPVLHEKGVDVCIVLLERTSQLDDRSTVSPLLPDVMKLICALAAHRKFAAMFVERRGILKLLAVPRVSETFYGLSSCLYTIGSLQGIMERVCALPLVVIHQVVKLAIELLDCSQDQARKNSALFFAAAFVFRAILDAFDAQDSLQKLLAILKDAASVRTGANTDRSAPEVMTSSEKQMAFHTCFALRQYFRAHLLLLVDSIRPSRISRGGVPSSMKPNIRAAYKPLDISNEAVDAIFLQLQKDRRLGPTFVKAQWPAVNNFLASSGHVTMLELCQTPPVDRYLHDLLQYAFGVLHIVTSIPDGRKAIAHATLSNNRAGIAVILDAANISNSIVDPEIIQPALNVLINLVCPPPSLSNKPPLAQNHQPVPGQATTRPSTDVAVGTQSTGNAPQTPVAPASSGLVGDRRIFLGAGTGSAGLAAKLEQVYRQAREAVRGNDGIKILLKLLQPRIYVNPPATPDCLRALACRVLLGLARDDTIAQILTKLEVGKSLSELIRDSGGQSSGTDQGRWQAELAQVALELIGIVTNSGHATTLTASDAATPTLRRIERAAIAAATPITYDSKELLLLIHEHLQASGLGDTASALLKEAQLTPLPSSASPSSIAYSTTQEMSTPLAQEQWPSGRANSGFFTSKPKVCAHDEDPNSRSNAALSAKKKHLASSTLEMPTPVAQQQWPSGRANCGFCPSIPKINARDEDPSSRGNAAPSAKKKQLTFSPSFSSQSRKQSFSHDALPQSTQRINCCSNSDPALADTSETAAELVLKNDLDADAQFKTPISFPRKRKLSELRDSSVPGKRIDLGERRNSTFADGSGLQTPASALDANQSGSSRLGQMTPASQLRLPSDPQPSNPERLSLDSLVVQYLKHQHRQCLAPITTLPPVSLLHPHVCPEPKRLLEAPLNMTGRLGTRELQSFYSGVHGNRRDRQFVFSRFKSWRSFRDETALFTCIALLGGTNHIAVGSHAGEIKIFEASSGSMLESVSGHQAPVTLVQPYVSRDTQLLLSSSSSDVQLWDASSITGGPRHSFDGCKAAKFSNSGLQFAALSCEASRKDVLLYDVQTCSPCQKLTDTVTSSRSNPYSLVHFSPCDTLILWNGVLWDRRIPEKVRRFDQFTDYGGGGFHPSRNEVIINSEIWDMRTFKLLRSVPSLDQTAITFNSRGDVIYAMLRRNIEDVMSAVHTRRVKHPLFAAFRTLDAINYSDIATIPVDRCLLDFATEPTDSFLGLITMEDQEDMFSSARMYEIGRRRPTDDDSDPDDDDETEDEDEDDEEEDDLDRILGLAGDNSDSGDDDLSSEDNEDSVSDFDEEADILIDGDFMEELIEGENEDDGNGEDEDDDDDGEMQDFMSSGEEDDYRDNIRSS.

Disordered stretches follow at residues 1–47 and 309–340; these read MDGQ…QSVE and KPGD…HEGA. Residues 37–47 are compositionally biased toward acidic residues; the sequence is NPEEGEEQSVE. The span at 309–322 shows a compositional bias: basic and acidic residues; the sequence is KPGDDNSVRDDPSR. Basic residues predominate over residues 323–334; that stretch reads HRLNRSKSRGRG. The residue at position 349 (S349) is a Phosphoserine. The tract at residues 882-924 is disordered; sequence NKPPLAQNHQPVPGQATTRPSTDVAVGTQSTGNAPQTPVAPAS. The segment covering 888-917 has biased composition (polar residues); the sequence is QNHQPVPGQATTRPSTDVAVGTQSTGNAPQ. Residues 1087–1119 form the LisH domain; the sequence is DSKELLLLIHEHLQASGLGDTASALLKEAQLTP. 3 disordered regions span residues 1157 to 1202, 1214 to 1260, and 1310 to 1377; these read TSKP…QWPS, PKIN…ALPQ, and SELR…NPER. Low complexity predominate over residues 1238–1251; sequence LTFSPSFSSQSRKQ. The span at 1310–1329 shows a compositional bias: basic and acidic residues; that stretch reads SELRDSSVPGKRIDLGERRN. Polar residues predominate over residues 1330-1362; it reads STFADGSGLQTPASALDANQSGSSRLGQMTPAS. WD repeat units follow at residues 1464–1503, 1506–1546, 1548–1586, 1587–1626, and 1633–1671; these read DETA…MLES, GHQA…GGPR, SFDG…TCSP, CQKL…RRIP, and DQFT…VPSL. 2 consecutive short sequence motifs (DWD box) follow at residues 1619 to 1626 and 1655 to 1662; these read VLWDRRIP and EIWDMRTF. The tract at residues 1763 to 1883 is disordered; sequence YEIGRRRPTD…DDYRDNIRSS (121 aa). Acidic residues-rich tracts occupy residues 1773-1796 and 1808-1864; these read DDSD…EDDL and DSGD…DGEM.

Belongs to the VPRBP/DCAF1 family. As to quaternary structure, component of the CUL4-RBX1-DDB1-DCAF1 E3 ubiquitin-protein ligase complex. Interacts with DDB1A through its DWD motifs. Ubiquitous but predominantly expressed in the inflorescence and roots.

It is found in the nucleus. It participates in protein modification; protein ubiquitination. Its function is as follows. Component of the CUL4-RBX1-DDB1-DCAF1 E3 ubiquitin-protein ligase complex, DCAF1 may function as the substrate recognition module within this complex. Appears to be required for plant embryogenesis and to affect several other developmental processes including leaf, shoot, and flower development. The chain is DDB1- and CUL4-associated factor homolog 1 (DCAF1) from Arabidopsis thaliana (Mouse-ear cress).